A 207-amino-acid chain; its full sequence is Large ribosomal subunit protein uL4 (207 aa).

A disordered region spans residues 54-74 (RSDVRGGGKKPYRQKGTGNAR).

It belongs to the universal ribosomal protein uL4 family. In terms of assembly, part of the 50S ribosomal subunit.

One of the primary rRNA binding proteins, this protein initially binds near the 5'-end of the 23S rRNA. It is important during the early stages of 50S assembly. It makes multiple contacts with different domains of the 23S rRNA in the assembled 50S subunit and ribosome. In terms of biological role, forms part of the polypeptide exit tunnel. In Magnetococcus marinus (strain ATCC BAA-1437 / JCM 17883 / MC-1), this protein is Large ribosomal subunit protein uL4.